Reading from the N-terminus, the 160-residue chain is Deoxyuridine 5'-triphosphate nucleotidohydrolase (160 aa).

Substrate-binding positions include 79-81 (RSG), asparagine 92, 96-98 (TVD), and lysine 106.

It belongs to the dUTPase family. The cofactor is Mg(2+).

It catalyses the reaction dUTP + H2O = dUMP + diphosphate + H(+). The protein operates within pyrimidine metabolism; dUMP biosynthesis; dUMP from dCTP (dUTP route): step 2/2. Functionally, this enzyme is involved in nucleotide metabolism: it produces dUMP, the immediate precursor of thymidine nucleotides and it decreases the intracellular concentration of dUTP so that uracil cannot be incorporated into DNA. This chain is Deoxyuridine 5'-triphosphate nucleotidohydrolase, found in Sinorhizobium medicae (strain WSM419) (Ensifer medicae).